A 404-amino-acid chain; its full sequence is MKYSEIMVRHGELSTKGKNRMRFINRLKANIQDVLSAYSEVTVRSTRDRTHVLLNGADDRSVIEALKPVFGIQGLSPVYKVEKSVPVLIAAVQEIMSSLYREGLTFKISSKRSDHQFELDSRDLNHTLGAAVFEALPHIKAQMKNPDVTLKVEIRDEAAYLSHEDIKGAGGLPVGASGKGMLMLSGGIDSPVAGYLSLKRGVEIEAVHFASPPYTSPGALRKAKDLTQRLTRFGGNIQFIEVPFTEIQEEIKHKAPEAYLMTLTRRFMLRITDAIREKRKALVIINGESLGQVASQTLESMQAINAVTSTPIIRPVVAMDKLEIIDIAQQIDTFDISIQPFEDCCTIFAPDRPKTNPKLANVERYESRFDVDGLVERAVAGIRVTEITPEIETDSLSTLIEELL.

Residues 60-165 (RSVIEALKPV…DEAAYLSHED (106 aa)) enclose the THUMP domain. ATP contacts are provided by residues 183–184 (ML), 208–209 (HF), arginine 265, glycine 287, and glutamine 296.

It belongs to the ThiI family.

It is found in the cytoplasm. The enzyme catalyses [ThiI sulfur-carrier protein]-S-sulfanyl-L-cysteine + a uridine in tRNA + 2 reduced [2Fe-2S]-[ferredoxin] + ATP + H(+) = [ThiI sulfur-carrier protein]-L-cysteine + a 4-thiouridine in tRNA + 2 oxidized [2Fe-2S]-[ferredoxin] + AMP + diphosphate. It carries out the reaction [ThiS sulfur-carrier protein]-C-terminal Gly-Gly-AMP + S-sulfanyl-L-cysteinyl-[cysteine desulfurase] + AH2 = [ThiS sulfur-carrier protein]-C-terminal-Gly-aminoethanethioate + L-cysteinyl-[cysteine desulfurase] + A + AMP + 2 H(+). It participates in cofactor biosynthesis; thiamine diphosphate biosynthesis. Functionally, catalyzes the ATP-dependent transfer of a sulfur to tRNA to produce 4-thiouridine in position 8 of tRNAs, which functions as a near-UV photosensor. Also catalyzes the transfer of sulfur to the sulfur carrier protein ThiS, forming ThiS-thiocarboxylate. This is a step in the synthesis of thiazole, in the thiamine biosynthesis pathway. The sulfur is donated as persulfide by IscS. The protein is Probable tRNA sulfurtransferase of Streptococcus equi subsp. equi (strain 4047).